Here is a 250-residue protein sequence, read N- to C-terminus: Small ribosomal subunit protein uS2 (250 aa).

It belongs to the universal ribosomal protein uS2 family.

The polypeptide is Small ribosomal subunit protein uS2 (Paraburkholderia phymatum (strain DSM 17167 / CIP 108236 / LMG 21445 / STM815) (Burkholderia phymatum)).